The chain runs to 458 residues: Zinc finger protein 19 (458 aa).

Residues 14-85 (VTFEDVAVHF…EAQDDPPAER (72 aa)) form the KRAB domain. C2H2-type zinc fingers lie at residues 161-183 (FICE…QRIH), 189-211 (FECS…QRIH), 217-239 (YQCE…QRIH), 245-267 (YYCT…QRIH), 273-295 (YECN…QKIH), 301-323 (YECN…QRIH), 329-351 (YSCK…QRIH), 357-379 (FDCV…LRIH), and 385-407 (YVCD…QRIH). The C2H2-type 10; atypical zinc-finger motif lies at 413–433 (YECSKYEKAFGTSSQLGHLEH).

Belongs to the krueppel C2H2-type zinc-finger protein family.

Its subcellular location is the nucleus. Functionally, may be involved in transcriptional regulation. The polypeptide is Zinc finger protein 19 (ZNF19) (Homo sapiens (Human)).